The following is a 2038-amino-acid chain: Fer-1-like protein 5 (2038 aa).

C2 domains lie at 1 to 100, 145 to 265, 307 to 424, 1055 to 1186, 1225 to 1345, 1467 to 1587, and 1705 to 1853; these read MLRV…MFVR, TQKK…TLLR, QNTR…QGMY, TPED…FTPL, IPCK…SLNY, PKPP…ARCG, and GPPG…KQCS. Positions 1502, 1508, 1557, 1558, 1559, 1565, 1824, 1827, and 1830 each coordinate Ca(2+). A helical membrane pass occupies residues 1961-1981; that stretch reads IICLVVTLVIGFILLNFVYSA.

The protein belongs to the ferlin family. In terms of assembly, interacts (via second C2 domain) with EHD1 and EHD2. It depends on Ca(2+) as a cofactor. Expressed in differentiating myoblasts and myotubes.

It is found in the cell membrane. The protein resides in the membrane. In terms of biological role, plays a role in myoblast fusion; probable mediator of endocytic recycling for membrane trafficking events during myotube formation. This chain is Fer-1-like protein 5 (Fer1l5), found in Mus musculus (Mouse).